The sequence spans 171 residues: Skp-like protein (171 aa).

A signal peptide spans 1–21; it reads MKKLLFSTFLLVLGSTSAAHA.

This sequence belongs to the Skp family.

This Chlamydia pneumoniae (Chlamydophila pneumoniae) protein is Skp-like protein.